A 196-amino-acid polypeptide reads, in one-letter code: MVALSVVELLKEKIRQEGRVISDDVLKVDSFLNHQIDPVLMLKVGEEFARRFAGSAITKVLTVEASGIAVALMTGLSLKVPVVFAKKKQPSTMDGETYCGRVRSFTKEEVIDIVVAGSYLGPEDRVLIIDDFLASGEAARGLLKIITQAGATLVGVGTVIEKVFQTGGEALRDQGIRVESLVQIGSLAGGQIEFLN.

Residues leucine 26 and asparagine 33 each coordinate xanthine. A 5-phospho-alpha-D-ribose 1-diphosphate-binding site is contributed by 134-138 (ASGEA). Lysine 162 serves as a coordination point for xanthine.

This sequence belongs to the purine/pyrimidine phosphoribosyltransferase family. Xpt subfamily. Homodimer.

Its subcellular location is the cytoplasm. It catalyses the reaction XMP + diphosphate = xanthine + 5-phospho-alpha-D-ribose 1-diphosphate. Its pathway is purine metabolism; XMP biosynthesis via salvage pathway; XMP from xanthine: step 1/1. Converts the preformed base xanthine, a product of nucleic acid breakdown, to xanthosine 5'-monophosphate (XMP), so it can be reused for RNA or DNA synthesis. The sequence is that of Xanthine phosphoribosyltransferase from Moorella thermoacetica (strain ATCC 39073 / JCM 9320).